We begin with the raw amino-acid sequence, 338 residues long: MTCTIVVGGQWGDEGKGKIISYLCKKDNPSIIARGGVGPNAGHTVEVDGEKYGIRMVPTGFPNVNAKLAVGAGVLTDPEVLLKEIQMLEKFNVGERMIIDFRCGIIEEIHKELDKSNEHLSKEIGSTGTGCGPANVDRAMRTLKQGKDVESISKYLGDVSEAVNEALEAGYNVLIEGTQGSLLSLFYGSYPYVTSKDTNAASFAADVGVGPTKIDEVVAVFKSYPTRVGEGPFPTEMSVEEAESLGVVEYGTVTGRRRRVGYFDHELAKKVCRLNGATQIAITCLDKYDNECYGITEYEKLSEKGKAFIKEVEEKVGVKVTLISTGPELTQTIDVRNK.

GTP is bound by residues 12–18 (GDEGKGK) and 42–44 (GHT). The active-site Proton acceptor is the Asp-13. The Mg(2+) site is built by Asp-13 and Gly-42. IMP is bound by residues 13–16 (DEGK), 40–43 (NAGH), Thr-127, Arg-141, Gln-179, Thr-194, and Arg-256. Catalysis depends on His-43, which acts as the Proton donor. 252-258 (TVTGRRR) lines the substrate pocket. GTP is bound by residues Arg-258, 284 to 286 (CLD), and 324 to 326 (STG).

Belongs to the adenylosuccinate synthetase family. Homodimer. Mg(2+) serves as cofactor.

The protein localises to the cytoplasm. It catalyses the reaction IMP + L-aspartate + GTP = N(6)-(1,2-dicarboxyethyl)-AMP + GDP + phosphate + 2 H(+). The protein operates within purine metabolism; AMP biosynthesis via de novo pathway; AMP from IMP: step 1/2. Plays an important role in the de novo pathway of purine nucleotide biosynthesis. Catalyzes the first committed step in the biosynthesis of AMP from IMP. This Methanococcus maripaludis (strain C7 / ATCC BAA-1331) protein is Adenylosuccinate synthetase.